A 580-amino-acid chain; its full sequence is E3 ubiquitin-protein ligase TRIM45 (580 aa).

The segment at 29-98 (CPTCLRLFKV…QIGILCPVCD (70 aa)) adopts an RING-type zinc-finger fold. B box-type zinc fingers lie at residues 130 to 176 (GQGL…MVDL) and 186 to 227 (GKPI…YDFT). Residues C135, C138, C158, H162, C191, H194, C214, and H219 each contribute to the Zn(2+) site. A coiled-coil region spans residues 249-329 (VEALEDALAQ…LLADMRTGVE (81 aa)). A Filamin repeat occupies 394–497 (TQEVDPAQCV…VQGSPFNVTV (104 aa)).

This sequence belongs to the TRIM/RBCC family.

The protein resides in the cytoplasm. It localises to the nucleus. The enzyme catalyses S-ubiquitinyl-[E2 ubiquitin-conjugating enzyme]-L-cysteine + [acceptor protein]-L-lysine = [E2 ubiquitin-conjugating enzyme]-L-cysteine + N(6)-ubiquitinyl-[acceptor protein]-L-lysine.. In terms of biological role, E3 ubiquitin-protein ligase that plays a role in the regulation of inflammatory response. Mechanistically, mediates the 'Lys-48'-linked polyubiquitination of TAB2, a regulatory protein of the kinase TAK1, leading to its degradation via the proteasomal pathway and inhibition of the TLR-mediated inflammatory immune response. May act as a transcriptional repressor in mitogen-activated protein kinase signaling pathway. This Mus musculus (Mouse) protein is E3 ubiquitin-protein ligase TRIM45 (Trim45).